The following is a 141-amino-acid chain: Putative pre-16S rRNA nuclease (141 aa).

The protein belongs to the YqgF nuclease family.

The protein resides in the cytoplasm. Its function is as follows. Could be a nuclease involved in processing of the 5'-end of pre-16S rRNA. This is Putative pre-16S rRNA nuclease from Dictyoglomus turgidum (strain DSM 6724 / Z-1310).